A 279-amino-acid chain; its full sequence is Tryptophan synthase alpha chain (279 aa).

Catalysis depends on proton acceptor residues E50 and D61.

It belongs to the TrpA family. In terms of assembly, tetramer of two alpha and two beta chains.

The catalysed reaction is (1S,2R)-1-C-(indol-3-yl)glycerol 3-phosphate + L-serine = D-glyceraldehyde 3-phosphate + L-tryptophan + H2O. It functions in the pathway amino-acid biosynthesis; L-tryptophan biosynthesis; L-tryptophan from chorismate: step 5/5. In terms of biological role, the alpha subunit is responsible for the aldol cleavage of indoleglycerol phosphate to indole and glyceraldehyde 3-phosphate. This Methylobacterium radiotolerans (strain ATCC 27329 / DSM 1819 / JCM 2831 / NBRC 15690 / NCIMB 10815 / 0-1) protein is Tryptophan synthase alpha chain.